The following is a 545-amino-acid chain: Threonine--tRNA ligase catalytic subunit (545 aa).

The tract at residues 139 to 433 (DHRLIGEKLD…LLEHFKGKLP (295 aa)) is catalytic. 3 residues coordinate Zn(2+): Cys231, His282, and His410.

The protein belongs to the class-II aminoacyl-tRNA synthetase family. In terms of assembly, homodimer. Probably interacts with its editing subunit. The cofactor is Zn(2+).

The protein resides in the cytoplasm. The catalysed reaction is tRNA(Thr) + L-threonine + ATP = L-threonyl-tRNA(Thr) + AMP + diphosphate + H(+). Functionally, catalyzes the attachment of threonine to tRNA(Thr) in a two-step reaction: L-threonine is first activated by ATP to form Thr-AMP and then transferred to the acceptor end of tRNA(Thr). Also activates L-serine and transfers it to tRNA(Thr) but cannot deacylate incorrectly charged amino acid; unlike most archaea the editing function is found in a freestanding protein. The chain is Threonine--tRNA ligase catalytic subunit from Saccharolobus islandicus (strain M.16.27) (Sulfolobus islandicus).